The following is a 482-amino-acid chain: ADP-ribosylation factor GTPase-activating protein effector protein 1 (482 aa).

A disordered region spans residues 116–156 (QHKSTHSHHINHQTHPIHSSSSNSNSNNRIPTKTDSSKQHT). Residues 118–127 (KSTHSHHINH) are compositionally biased toward basic residues. Low complexity predominate over residues 134–143 (SSSSNSNSNN). Residues 170–297 (DELLSIVRKI…FVIDSNQGRE (128 aa)) enclose the Arf-GAP domain. The C4-type zinc-finger motif lies at 186–210 (CCDCGSTATVEWVSINLLCILCIKC).

The protein localises to the cytoplasm. GTPase-activating protein (GAP) for the ADP ribosylation factors ARF1 and ARF2. May be involved in the endocytic pathway. The chain is ADP-ribosylation factor GTPase-activating protein effector protein 1 (AGE1) from Saccharomyces cerevisiae (strain ATCC 204508 / S288c) (Baker's yeast).